We begin with the raw amino-acid sequence, 130 residues long: MAKRKVTKKKKIKKQVGRGVVYISATFNNTMITVTDEMGNALCWSSAGALGFKGSKKSTPFAAQQAVEDVMAKAKEYGIKEVGIKVQGPGGGRETAVKTVGAIEGIKVLWMKDVTPLPHNGCRPRKRRRV.

The protein belongs to the universal ribosomal protein uS11 family. As to quaternary structure, part of the 30S ribosomal subunit. Interacts with proteins S7 and S18. Binds to IF-3.

Functionally, located on the platform of the 30S subunit, it bridges several disparate RNA helices of the 16S rRNA. Forms part of the Shine-Dalgarno cleft in the 70S ribosome. This Nautilia profundicola (strain ATCC BAA-1463 / DSM 18972 / AmH) protein is Small ribosomal subunit protein uS11.